A 299-amino-acid polypeptide reads, in one-letter code: Probable lipid kinase YegS-like (299 aa).

The DAGKc domain maps to 2–133; it reads ATFPASLLIL…IDIAQVNDKT (132 aa). Residues Thr40, 66 to 72, and Thr95 each bind ATP; that span reads GDGTINE. Positions 215, 218, and 220 each coordinate Mg(2+). The active-site Proton acceptor is the Glu271.

The protein belongs to the diacylglycerol/lipid kinase family. YegS lipid kinase subfamily. The cofactor is Mg(2+). Ca(2+) is required as a cofactor.

The protein resides in the cytoplasm. In terms of biological role, probably phosphorylates lipids; the in vivo substrate is unknown. This Citrobacter koseri (strain ATCC BAA-895 / CDC 4225-83 / SGSC4696) protein is Probable lipid kinase YegS-like.